The primary structure comprises 185 residues: Probable E3 ubiquitin-protein ligase ATL44 (185 aa).

Residues 29–49 (VVILSALLCALICVAGLAAVV) traverse the membrane as a helical segment. The RING-type; atypical zinc-finger motif lies at 102–144 (CAICLTDFADGEEIRVLPLCGHSFHVECIDKWLVSRSSCPSCR). Residues 163–185 (MKDQAHRHQHHQHSSTTIPTFLP) form a disordered region. Residues 176-185 (SSTTIPTFLP) show a composition bias toward polar residues.

Belongs to the RING-type zinc finger family. ATL subfamily. In terms of assembly, interacts with BIK1. Auto-monoubiquitination. Expressed in stems, flowers and green siliques.

It localises to the membrane. It catalyses the reaction S-ubiquitinyl-[E2 ubiquitin-conjugating enzyme]-L-cysteine + [acceptor protein]-L-lysine = [E2 ubiquitin-conjugating enzyme]-L-cysteine + N(6)-ubiquitinyl-[acceptor protein]-L-lysine.. The protein operates within protein modification; protein ubiquitination. In terms of biological role, E3 ubiquitin-protein ligase that possess E3 ubiquitin ligase activity in vitro and mediates protein monoubiquitination. Triggers the monoubiquitination of phosphorylated BIK1 in response to pathogen-associated molecular pattern (PAMP) detection. The polypeptide is Probable E3 ubiquitin-protein ligase ATL44 (Arabidopsis thaliana (Mouse-ear cress)).